Here is a 132-residue protein sequence, read N- to C-terminus: Small ribosomal subunit protein uS8 (132 aa).

Belongs to the universal ribosomal protein uS8 family. As to quaternary structure, part of the 30S ribosomal subunit. Contacts proteins S5 and S12.

Functionally, one of the primary rRNA binding proteins, it binds directly to 16S rRNA central domain where it helps coordinate assembly of the platform of the 30S subunit. In Corynebacterium kroppenstedtii (strain DSM 44385 / JCM 11950 / CIP 105744 / CCUG 35717), this protein is Small ribosomal subunit protein uS8.